Consider the following 285-residue polypeptide: 2-dehydro-3-deoxyphosphooctonate aldolase (285 aa).

The protein belongs to the KdsA family.

It localises to the cytoplasm. It carries out the reaction D-arabinose 5-phosphate + phosphoenolpyruvate + H2O = 3-deoxy-alpha-D-manno-2-octulosonate-8-phosphate + phosphate. The protein operates within carbohydrate biosynthesis; 3-deoxy-D-manno-octulosonate biosynthesis; 3-deoxy-D-manno-octulosonate from D-ribulose 5-phosphate: step 2/3. It participates in bacterial outer membrane biogenesis; lipopolysaccharide biosynthesis. This is 2-dehydro-3-deoxyphosphooctonate aldolase from Bordetella parapertussis (strain 12822 / ATCC BAA-587 / NCTC 13253).